A 291-amino-acid polypeptide reads, in one-letter code: ATP synthase subunit a (291 aa).

6 consecutive transmembrane segments (helical) span residues 51 to 71 (FSFTNPSLFMLLTLSLVLLLV), 117 to 137 (FFPCIFVTFTFLLFCNLQGMI), 146 to 166 (HFLITLGLSFSIFIGITIVGF), 173 to 193 (FLSFLLPAGVPLPLAPFLVLL), 213 to 233 (MMAGHSLVKILSGFAWTMLCM), and 239 to 259 (FIGDLGPLFIVLALTGPELGV).

This sequence belongs to the ATPase A chain family. As to quaternary structure, F-type ATPases have 2 components, CF(1) - the catalytic core - and CF(0) - the membrane proton channel. CF(1) has five subunits: alpha(3), beta(3), gamma(1), delta(1), epsilon(1). CF(0) has three main subunits: a, b and c.

The protein localises to the mitochondrion inner membrane. Functionally, mitochondrial membrane ATP synthase (F(1)F(0) ATP synthase or Complex V) produces ATP from ADP in the presence of a proton gradient across the membrane which is generated by electron transport complexes of the respiratory chain. F-type ATPases consist of two structural domains, F(1) - containing the extramembraneous catalytic core and F(0) - containing the membrane proton channel, linked together by a central stalk and a peripheral stalk. During catalysis, ATP synthesis in the catalytic domain of F(1) is coupled via a rotary mechanism of the central stalk subunits to proton translocation. Key component of the proton channel; it may play a direct role in the translocation of protons across the membrane. This is ATP synthase subunit a (ATP6) from Vicia faba (Broad bean).